The chain runs to 95 residues: Small ribosomal subunit protein uS19 (95 aa).

It belongs to the universal ribosomal protein uS19 family.

Protein S19 forms a complex with S13 that binds strongly to the 16S ribosomal RNA. The chain is Small ribosomal subunit protein uS19 from Chloroflexus aurantiacus (strain ATCC 29366 / DSM 635 / J-10-fl).